The chain runs to 206 residues: Threonine efflux protein (206 aa).

A helical transmembrane segment spans residues 1–21 (MMMLFFTVAMVHIVALMSPGP). The Periplasmic segment spans residues 22-43 (DFFFVSQTAVSRSRKEAMMGVL). A helical transmembrane segment spans residues 44–64 (GITCGVMVWAGVALLGLHLII). The Cytoplasmic segment spans residues 65–66 (EK). A helical membrane pass occupies residues 67–87 (MAWLHTIIMVGGGLYLCWMGY). Residues 88–149 (QMLRGALKKQ…VGDNVGAAAR (62 aa)) lie on the Periplasmic side of the membrane. A helical transmembrane segment spans residues 150-173 (WGIFALITLETLAWFTVVASLFAL). Topologically, residues 174–206 (PKMRRGYQRLAKWIDGFAGALFAGFGIHLIISR) are cytoplasmic.

Belongs to the Rht family.

Its subcellular location is the cell inner membrane. Functionally, conducts the efflux of threonine. In Salmonella typhimurium (strain LT2 / SGSC1412 / ATCC 700720), this protein is Threonine efflux protein (rhtC).